The sequence spans 335 residues: Phospholipid scramblase 1 (335 aa).

The segment at 1–101 (MEKHGPPEHA…NHPGGPGGTP (101 aa)) is proline-rich domain (PRD). Residues 1 to 102 (MEKHGPPEHA…HPGGPGGTPW (102 aa)) form a disordered region. Residues 1–305 (MEKHGPPEHA…IQFPLDLDVK (305 aa)) are Cytoplasmic-facing. Tandem repeats lie at residues 23-29 (QGPYPGP), 30-36 (QGPYPGP), 37-43 (QGPYAGP), 44-50 (QGPYPGP), 51-57 (QGPYAGP), and 58-64 (QGPYPGP). The interval 23 to 71 (QGPYPGPQGPYPGPQGPYAGPQGPYPGPQGPYAGPQGPYPGPQPGYPVP) is 7 X 7 AA tandem repeats of Q-G-P-Y-[AP]-G-P. Pro residues predominate over residues 26–37 (YPGPQGPYPGPQ). The span at 59-72 (GPYPGPQPGYPVPP) shows a compositional bias: pro residues. An SH3-binding 1 motif is present at residues 64 to 72 (PQPGYPVPP). Residues 65–71 (QPGYPVP) form a 7; approximate repeat. Tyr-91 is subject to Phosphotyrosine; by ABL. Positions 101-109 (PWMQAPPPP) match the SH3-binding 2 motif. Thr-178 carries the post-translational modification Phosphothreonine; by PKC/PRKCD. Residues Cys-201, Cys-202, Cys-205, and Cys-206 are each lipidated (S-palmitoyl cysteine). Positions 274–283 (GKISKQWSGF) match the Nuclear localization signal motif. A helical transmembrane segment spans residues 306-322 (MKAVMLGACFLIDFMFF). Residues 323–335 (ERTGNEEQRSGVW) lie on the Extracellular side of the membrane.

The protein belongs to the phospholipid scramblase family. In terms of assembly, forms homooligomers in the presence of calcium. Interacts with ABL. Interacts with RELT, RELL1 and RELL2. Interacts with OXSR1 in the presence of RELT. Interacts with OCLN, TOP2A and TOP2B. Interacts with TRPC1, TRPC4 and TRPC5. Interacts with ILDR1. It depends on Ca(2+) as a cofactor. Mg(2+) is required as a cofactor. The cofactor is Zn(2+). In terms of processing, phosphorylated on tyrosine residues. Phosphorylated by OXSR1 in the presence of RELT. Phosphorylation at Thr-178 by PKC/PKCD increases its phospholipid scramblase activity during both cell stimulation and apoptosis. Palmitoylation is required for its phospholipid scramblase activity. Palmitoylation regulates its localization to the cell membrane or the nucleus; trafficking to the cell membrane is dependent upon palmitoylation whereas in the absence of palmitoylation, localizes to the nucleus.

It localises to the cell membrane. The protein localises to the nucleus. The protein resides in the cytoplasm. Its subcellular location is the perinuclear region. The catalysed reaction is a 1,2-diacyl-sn-glycero-3-phosphocholine(in) = a 1,2-diacyl-sn-glycero-3-phosphocholine(out). The enzyme catalyses a 1,2-diacyl-sn-glycero-3-phosphoethanolamine(in) = a 1,2-diacyl-sn-glycero-3-phosphoethanolamine(out). It catalyses the reaction a 1,2-diacyl-sn-glycero-3-phospho-L-serine(in) = a 1,2-diacyl-sn-glycero-3-phospho-L-serine(out). In terms of biological role, catalyzes calcium-induced ATP-independent rapid bidirectional and non-specific distribution of phospholipids (lipid scrambling or lipid flip-flop) between the inner and outer leaflet of the plasma membrane resulting in collapse of the phospholipid asymmetry which leads to phosphatidylserine externalization on the cell surface. Mediates calcium-dependent phosphatidylserine externalization and apoptosis in neurons via its association with TRPC5. Also exhibits magnesium-dependent nuclease activity against double-stranded DNA and RNA but not single-stranded DNA and can enhance DNA decatenation mediated by TOP2A. Negatively regulates FcR-mediated phagocytosis in differentiated macrophages. May contribute to cytokine-regulated cell proliferation and differentiation. This chain is Phospholipid scramblase 1 (Plscr1), found in Rattus norvegicus (Rat).